We begin with the raw amino-acid sequence, 93 residues long: Co-chaperonin GroES 2 (93 aa).

The tract at residues 1 to 20 is disordered; that stretch reads MQPLGERIVVQREESETTTA.

The protein belongs to the GroES chaperonin family. As to quaternary structure, heptamer of 7 subunits arranged in a ring. Interacts with the chaperonin GroEL.

Its subcellular location is the cytoplasm. Together with the chaperonin GroEL, plays an essential role in assisting protein folding. The GroEL-GroES system forms a nano-cage that allows encapsulation of the non-native substrate proteins and provides a physical environment optimized to promote and accelerate protein folding. GroES binds to the apical surface of the GroEL ring, thereby capping the opening of the GroEL channel. The protein is Co-chaperonin GroES 2 of Rhodopirellula baltica (strain DSM 10527 / NCIMB 13988 / SH1).